The sequence spans 457 residues: L-asparaginase-like protein GL17509 (457 aa).

An N-terminal signal peptide occupies residues 1–20; it reads MRYLCRAQLLSLLLLPLLKA. Cystine bridges form between C72–C78, C172–C188, and C327–C354.

It belongs to the Ntn-hydrolase family.

The sequence is that of L-asparaginase-like protein GL17509 from Drosophila persimilis (Fruit fly).